The chain runs to 145 residues: Small ribosomal subunit protein uS9 (145 aa).

The protein belongs to the universal ribosomal protein uS9 family.

Its subcellular location is the cytoplasm. This is Small ribosomal subunit protein uS9 (RPS16) from Fritillaria agrestis (Stinkbells).